The following is a 300-amino-acid chain: Phosphatidylserine decarboxylase proenzyme (300 aa).

Residues Asp117, His173, and Ser260 each act as charge relay system; for autoendoproteolytic cleavage activity in the active site. The active-site Schiff-base intermediate with substrate; via pyruvic acid; for decarboxylase activity is Ser260. The residue at position 260 (Ser260) is a Pyruvic acid (Ser); by autocatalysis.

This sequence belongs to the phosphatidylserine decarboxylase family. PSD-B subfamily. Prokaryotic type II sub-subfamily. Heterodimer of a large membrane-associated beta subunit and a small pyruvoyl-containing alpha subunit. Pyruvate is required as a cofactor. In terms of processing, is synthesized initially as an inactive proenzyme. Formation of the active enzyme involves a self-maturation process in which the active site pyruvoyl group is generated from an internal serine residue via an autocatalytic post-translational modification. Two non-identical subunits are generated from the proenzyme in this reaction, and the pyruvate is formed at the N-terminus of the alpha chain, which is derived from the carboxyl end of the proenzyme. The autoendoproteolytic cleavage occurs by a canonical serine protease mechanism, in which the side chain hydroxyl group of the serine supplies its oxygen atom to form the C-terminus of the beta chain, while the remainder of the serine residue undergoes an oxidative deamination to produce ammonia and the pyruvoyl prosthetic group on the alpha chain. During this reaction, the Ser that is part of the protease active site of the proenzyme becomes the pyruvoyl prosthetic group, which constitutes an essential element of the active site of the mature decarboxylase.

The protein localises to the cell membrane. The catalysed reaction is a 1,2-diacyl-sn-glycero-3-phospho-L-serine + H(+) = a 1,2-diacyl-sn-glycero-3-phosphoethanolamine + CO2. It participates in phospholipid metabolism; phosphatidylethanolamine biosynthesis; phosphatidylethanolamine from CDP-diacylglycerol: step 2/2. Its function is as follows. Catalyzes the formation of phosphatidylethanolamine (PtdEtn) from phosphatidylserine (PtdSer). In Fusobacterium nucleatum subsp. nucleatum (strain ATCC 25586 / DSM 15643 / BCRC 10681 / CIP 101130 / JCM 8532 / KCTC 2640 / LMG 13131 / VPI 4355), this protein is Phosphatidylserine decarboxylase proenzyme.